The following is a 102-amino-acid chain: UPF0045 protein Mb1933 (102 aa).

It belongs to the UPF0045 family.

The polypeptide is UPF0045 protein Mb1933 (Mycobacterium bovis (strain ATCC BAA-935 / AF2122/97)).